Reading from the N-terminus, the 288-residue chain is Probable coatomer subunit epsilon (288 aa).

The residue at position 262 (Ser262) is a Phosphoserine.

Belongs to the COPE family. As to quaternary structure, oligomeric complex that consists of at least the alpha, beta, beta', gamma, delta, epsilon and zeta subunits.

The protein localises to the cytoplasm. Its subcellular location is the golgi apparatus membrane. It is found in the cytoplasmic vesicle. It localises to the COPI-coated vesicle membrane. In terms of biological role, the coatomer is a cytosolic protein complex that binds to dilysine motifs and reversibly associates with Golgi non-clathrin-coated vesicles, which further mediate biosynthetic protein transport from the ER, via the Golgi up to the trans Golgi network. The coatomer complex is required for budding from Golgi membranes, and is essential for the retrograde Golgi-to-ER transport of dilysine-tagged proteins. The chain is Probable coatomer subunit epsilon (sec28) from Schizosaccharomyces pombe (strain 972 / ATCC 24843) (Fission yeast).